Reading from the N-terminus, the 994-residue chain is MLRQNLLDQLKHFIETVSNGHSCPQLLTSPNLIKLALGFLEELPATRDIVFEYFALLAEISVQLYVSPEMADPKTGMPVSQVKLAGNRQQQQRAPEYEAFNLVKTALQSLVWKGPPAWSPLIANWSLELVAKLSDKYTQRRMTITASCNYWLECSAMHGLMTLINSCFRKLTQPEEEACVEIMLNAFHRFPMTFDWIVARLGGCFPYKIIMQILQCGIKRFVDDYRCHLDSEAGILDYMTSCHEQHLRAAFREMLREGFAPKKPLDVAVVPFLLITTNYSDTILQSLVNVLVEIYTEDMCEVIVQKAPLWLSNKMFAGMQPTLNNAVLRLNERGATLLLTAAKMAEKYVWCQDFLDNSMQELEQWVLNQRNFPLLADLAYEETKYMLWKSCLSTNLFEQQTAVRLLLVVSSQHPNIYYQTISQLLKKSYAQNPNGIGALIRLLGGQSGMVNFPGFTPGFKMVLEDITLDVQVNNRLPVPPGTPTEAFNTFSNLNILARMHKSKNVAPYIKAQHLNQALNECLPKILQIFDCTVNKLVLRIDRDAAERIADKFRAQQSKNSNNNNELCNGKDYGKRTKLEPGEDKVDDEDATRMRLAHLIVDLLNNIEAGSRTTVLRTPLVLKLATLSVKYFFVGLTEKTVIRRAAASHRSYTLLQRQCSARKIARTVCLRELVERALFYHGHLLGQLEVYQLDELEIPEHEHLILQNLHTSSGANSNRSVLHSGIIGRGLRPVLPPSERNCDAEKQALYLKALNACCADLEKPNNVEGYSLVSLLLVELVSTDVMYNGLPFPDEEFTRVTMERDMLIRRAFINSPVLWAVLGLIAGHRPALCYSSVLLRALCATCLHHWRGKNVNRFQPTAANDELMLCTKKMLQLLAMSQLIPPPLTNLHLIIEHFESAEIALLLRECIWNYLKDHVPSPALFHVDNNGLHWRNTNTQLAKVPPQYVDPLRHLMQRKLSTLGPHYHQMFIMGELMEGDSEPDPTARLQIVEID.

The interval 559–586 (NSNNNNELCNGKDYGKRTKLEPGEDKVD) is disordered. Positions 571–583 (DYGKRTKLEPGED) are enriched in basic and acidic residues. 2 helical membrane passes run 769-786 (YSLV…DVMY) and 810-826 (AFIN…LIAG).

It belongs to the Integrator subunit 5 family. As to quaternary structure, belongs to the multiprotein complex Integrator, at least composed of IntS1, IntS2, IntS3, IntS4, omd/IntS5, IntS6, defl/IntS7, IntS8, IntS9, IntS10, IntS11, IntS12, asun/IntS13, IntS14 and IntS15. The core complex associates with protein phosphatase 2A subunits mts/PP2A and Pp2A-29B, to form the Integrator-PP2A (INTAC) complex.

It localises to the nucleus membrane. Its subcellular location is the nucleus. The protein localises to the cytoplasm. In terms of biological role, component of the integrator complex, a multiprotein complex that terminates RNA polymerase II (Pol II) transcription in the promoter-proximal region of genes. The integrator complex provides a quality checkpoint during transcription elongation by driving premature transcription termination of transcripts that are unfavorably configured for transcriptional elongation: the complex terminates transcription by (1) catalyzing dephosphorylation of the C-terminal domain (CTD) of Pol II subunit Polr2A/Rbp1 and Spt5, and (2) degrading the exiting nascent RNA transcript via endonuclease activity. The integrator complex is also involved in the 3'-end processing of the U7 snRNA, and also the spliceosomal snRNAs U1, U2, U4 and U5. The chain is Integrator complex subunit 5 from Drosophila melanogaster (Fruit fly).